Consider the following 476-residue polypeptide: MNFETIIGLEVHVELKTNSKIFSASPTEFGADPNTQTSVIDLGYPGVLPTLNKEAVNFAMKAAMALNCEIATETKFDRKNYFYPDNPKAYQISQFDKPIGQNGWIEIEVGGQKKRIGITRLHLEEDAGKSTHTGEGYSLVDYNRQGLPLIEIVSEPDMRTPEEAYAYLEKLKSIIQYTGVSDCKMEEGSLRCDANISLRPVGQEKFGTKAELKNLNSFTYVQKGLEFEQARQEKELLSGGIIQQETRRYDEATKKTILMRVKEGSDDYRYFPEPDLVELYIDEEWKEQVRASIPELPDARKARYVAELGLPAYDAHVLTLTKEMSDFFEETVAGGADAKLASNWLMGEVLAYLNKQQKELKDVALTPAGLSKMIQLIEKGTISSKIAKKVFNELIEKGGDPEEIVKAKGLVQISDEGTLRKIVTEILDNNAQSIEDFKNGKDRAIGFLVGQIMKATKGQANPPLVNKILLEEINKR.

The protein belongs to the GatB/GatE family. GatB subfamily. Heterotrimer of A, B and C subunits.

The enzyme catalyses L-glutamyl-tRNA(Gln) + L-glutamine + ATP + H2O = L-glutaminyl-tRNA(Gln) + L-glutamate + ADP + phosphate + H(+). It catalyses the reaction L-aspartyl-tRNA(Asn) + L-glutamine + ATP + H2O = L-asparaginyl-tRNA(Asn) + L-glutamate + ADP + phosphate + 2 H(+). In terms of biological role, allows the formation of correctly charged Asn-tRNA(Asn) or Gln-tRNA(Gln) through the transamidation of misacylated Asp-tRNA(Asn) or Glu-tRNA(Gln) in organisms which lack either or both of asparaginyl-tRNA or glutaminyl-tRNA synthetases. The reaction takes place in the presence of glutamine and ATP through an activated phospho-Asp-tRNA(Asn) or phospho-Glu-tRNA(Gln). The chain is Aspartyl/glutamyl-tRNA(Asn/Gln) amidotransferase subunit B from Bacillus cytotoxicus (strain DSM 22905 / CIP 110041 / 391-98 / NVH 391-98).